Consider the following 152-residue polypeptide: UPF0178 protein Shewmr7_1635 (152 aa).

The protein belongs to the UPF0178 family.

The chain is UPF0178 protein Shewmr7_1635 from Shewanella sp. (strain MR-7).